We begin with the raw amino-acid sequence, 742 residues long: MEEGFRDRAAFIRGAKDIAKEVKKHAAKKVVKGLDRVQDEYSRRSYSRFEEEEDDDDFPAPADGYYRGEGAQDEEEGGASSDATEGHDEDDEIYEGEYQGIPRAESGGKGERMADGAPLAGVRGGLSDGEGPPGGRGEAQRRKDREELAQQYETILRECGHGRFQWTLYFVLGLALMADGVEVFVVGFVLPSAEKDMCLSDSNKGMLGLIVYLGMMVGAFLWGGLADRLGRRQCLLISLSVNSVFAFFSSFVQGYGTFLFCRLLSGVGIGGSIPIVFSYFSEFLAQEKRGEHLSWLCMFWMIGGVYAAAMAWAIIPHYGWSFQMGSAYQFHSWRVFVLVCAFPSVFAIGALTTQPESPRFFLENGKHDEAWMVLKQVHDTNMRAKGHPERVFSVTHIKTIHQEDELIEIQSDTGTWYQRWGVRALSLGGQVWGNFLSCFSPEYRRITLMMMGVWFTMSFSYYGLTVWFPDMIRHLQAVDYAARTKVFPGERVEHVTFNFTLENQIHRGGQYFNDKFIGLRLKSVSFEDSLFEECYFEDVTSSNTFFRNCTFINTVFYNTDLFEYKFVNSRLVNSTFLHNKEGCPLDVTGTGEGAYMVYFVSFLGTLAVLPGNIVSALLMDKIGRLRMLAGSSVLSCVSCFFLSFGNSESAMIALLCLFGGVSIASWNALDVLTVELYPSDKRTTAFGFLNALCKLAAVLGISIFTSFVGITKAAPILFASAALALGSSLALKLPETRGQVLQ.

Positions 1 to 57 are interaction with SYT1; the sequence is MEEGFRDRAAFIRGAKDIAKEVKKHAAKKVVKGLDRVQDEYSRRSYSRFEEEEDDDD. Residues 1–169 are Cytoplasmic-facing; sequence MEEGFRDRAA…GHGRFQWTLY (169 aa). Residues 40–49 are compositionally biased toward basic and acidic residues; it reads EYSRRSYSRF. The tract at residues 40-145 is disordered; that stretch reads EYSRRSYSRF…RGEAQRRKDR (106 aa). 2 positions are modified to phosphoserine: serine 80 and serine 81. At threonine 84 the chain carries Phosphothreonine. The segment covering 122 to 137 has biased composition (gly residues); that stretch reads VRGGLSDGEGPPGGRG. Serine 127 is modified (phosphoserine). Residues 170 to 190 traverse the membrane as a helical segment; that stretch reads FVLGLALMADGVEVFVVGFVL. The Extracellular portion of the chain corresponds to 191–205; that stretch reads PSAEKDMCLSDSNKG. The helical transmembrane segment at 206-226 threads the bilayer; the sequence is MLGLIVYLGMMVGAFLWGGLA. At 227–233 the chain is on the cytoplasmic side; the sequence is DRLGRRQ. A helical membrane pass occupies residues 234 to 254; sequence CLLISLSVNSVFAFFSSFVQG. The Extracellular portion of the chain corresponds to 255–262; that stretch reads YGTFLFCR. The chain crosses the membrane as a helical span at residues 263-283; it reads LLSGVGIGGSIPIVFSYFSEF. Residues 284–294 are Cytoplasmic-facing; that stretch reads LAQEKRGEHLS. Residues 295-315 form a helical membrane-spanning segment; sequence WLCMFWMIGGVYAAAMAWAII. The Extracellular segment spans residues 316–334; it reads PHYGWSFQMGSAYQFHSWR. The helical transmembrane segment at 335-355 threads the bilayer; the sequence is VFVLVCAFPSVFAIGALTTQP. Over 356-447 the chain is Cytoplasmic; the sequence is ESPRFFLENG…CFSPEYRRIT (92 aa). Residue serine 393 is modified to Phosphoserine. Residues 448–468 form a helical membrane-spanning segment; sequence LMMMGVWFTMSFSYYGLTVWF. Residues 469–598 lie on the Extracellular side of the membrane; sequence PDMIRHLQAV…GTGEGAYMVY (130 aa). Position 480 is a phosphotyrosine (tyrosine 480). N-linked (GlcNAc...) asparagine glycosylation is found at asparagine 498 and asparagine 548. Asparagine 573 is a glycosylation site (N-linked (GlcNAc...) asparagine; alternate). Asparagine 573 carries an N-linked (HexNAc...) asparagine; alternate glycan. A helical transmembrane segment spans residues 599–619; that stretch reads FVSFLGTLAVLPGNIVSALLM. Residues 620-626 are Cytoplasmic-facing; the sequence is DKIGRLR. A helical membrane pass occupies residues 627-647; that stretch reads MLAGSSVLSCVSCFFLSFGNS. Topologically, residues 648-651 are extracellular; sequence ESAM. A helical transmembrane segment spans residues 652 to 672; the sequence is IALLCLFGGVSIASWNALDVL. At 673-685 the chain is on the cytoplasmic side; it reads TVELYPSDKRTTA. Residues 686-708 form a helical membrane-spanning segment; the sequence is FGFLNALCKLAAVLGISIFTSFV. Residues 709 to 712 are Extracellular-facing; that stretch reads GITK. Residues 713-731 form a helical membrane-spanning segment; the sequence is AAPILFASAALALGSSLAL. At 732 to 742 the chain is on the cytoplasmic side; it reads KLPETRGQVLQ.

It belongs to the major facilitator superfamily. In terms of assembly, interacts with SYT1/synaptotagmin-1 in a calcium-dependent manner. Binds the adapter protein complex AP-2. (Microbial infection) Interacts with C.botulinum neurotoxin type A1 and type A2 (BoNT/A, botA). Interaction is improved by glycosylation of SV2. As to quaternary structure, (Microbial infection) Copurifies with C.botulinum neurotoxin type B (BoNT/B, botB) and synaptotagmin 1 (SYT1). Interaction does not require glycosylation of SV2 or SYT1 proteins. Another group finds only copurification with SYT1 and SYT2. In terms of assembly, (Microbial infection) Interacts with C.botulinum neurotoxin type E (BoNT/E). Interaction requires glycosylation of SV2 proteins. (Microbial infection) Copurifies with C.botulinum neurotoxin type F (BoNT/F) and synaptotagmin 1 (SYT2). Another group finds only copurification with BoNT/F. Interaction requires SV2 glycosylation. Post-translationally, phosphorylation by CK1 of the N-terminal cytoplasmic domain regulates interaction with SYT1. N-glycosylated, on at least 3 residues. Widely expressed throughout the brain (at protein level). Expressed by neural and endocrine cells of brain and spinal cord.

It localises to the presynapse. The protein localises to the cytoplasmic vesicle. The protein resides in the secretory vesicle. Its subcellular location is the synaptic vesicle membrane. Its function is as follows. Plays a role in the control of regulated secretion in neural and endocrine cells, enhancing selectively low-frequency neurotransmission. Positively regulates vesicle fusion by maintaining the readily releasable pool of secretory vesicles. (Microbial infection) Receptor for C.botulinum neurotoxin type A (BoNT/A, botA); the toxin binds via extracellular loop 4. Restores uptake of BoNT/A in mouse cells that are deleted for SV2 receptor. Glycosylation of Asn-573 is not essential for receptor activity, but enhances uptake. Also serves as a receptor for the closely related C.botulinum neurotoxin type A2; glycosylation is not essential but enhances the interaction. In terms of biological role, possible receptor for C.botulinum neurotoxin type D (BoNT/D, botD); BoNT/D does not bind to extracellular loop 4 as do BoNT/A and BoNT/E, nor to loop 1 or loop 3. Another group does not find a convincing interaction with SV2. Functionally, (Microbial infection) Receptor for C.botulinum neurotoxin type E (BoNT/E); the toxin probably binds via extracellular loop 4 and requires glycosylation of Asn-573. Restores uptake of BoNT/E in mouse cells that are deleted for SV2 receptor. Its function is as follows. (Microbial infection) Receptor for C.botulinum neurotoxin type F (BoNT/F). Binding requires glycosylation of Asn-573. The protein is Synaptic vesicle glycoprotein 2A (Sv2a) of Rattus norvegicus (Rat).